The primary structure comprises 129 residues: L-ectoine synthase (129 aa).

It belongs to the ectoine synthase family.

It catalyses the reaction (2S)-4-acetamido-2-aminobutanoate = L-ectoine + H2O. It functions in the pathway amine and polyamine biosynthesis; ectoine biosynthesis; L-ectoine from L-aspartate 4-semialdehyde: step 3/3. Catalyzes the circularization of gamma-N-acetyl-alpha,gamma-diaminobutyric acid (ADABA) to ectoine (1,4,5,6-tetrahydro-2-methyl-4-pyrimidine carboxylic acid), which is an excellent osmoprotectant. This chain is L-ectoine synthase, found in Desulfosudis oleivorans (strain DSM 6200 / JCM 39069 / Hxd3) (Desulfococcus oleovorans).